The primary structure comprises 619 residues: 1-deoxy-D-xylulose-5-phosphate synthase (619 aa).

Thiamine diphosphate is bound by residues H63 and 104–106 (GHS). Residue D136 coordinates Mg(2+). Residues 137 to 138 (GS), N165, Y272, and E353 contribute to the thiamine diphosphate site. N165 provides a ligand contact to Mg(2+).

This sequence belongs to the transketolase family. DXPS subfamily. Homodimer. The cofactor is Mg(2+). Thiamine diphosphate serves as cofactor.

It carries out the reaction D-glyceraldehyde 3-phosphate + pyruvate + H(+) = 1-deoxy-D-xylulose 5-phosphate + CO2. Its pathway is metabolic intermediate biosynthesis; 1-deoxy-D-xylulose 5-phosphate biosynthesis; 1-deoxy-D-xylulose 5-phosphate from D-glyceraldehyde 3-phosphate and pyruvate: step 1/1. Catalyzes the acyloin condensation reaction between C atoms 2 and 3 of pyruvate and glyceraldehyde 3-phosphate to yield 1-deoxy-D-xylulose-5-phosphate (DXP). The chain is 1-deoxy-D-xylulose-5-phosphate synthase from Wolinella succinogenes (strain ATCC 29543 / DSM 1740 / CCUG 13145 / JCM 31913 / LMG 7466 / NCTC 11488 / FDC 602W) (Vibrio succinogenes).